Consider the following 1009-residue polypeptide: Probable beta-galactosidase B (1009 aa).

Positions 1–21 are cleaved as a signal peptide; the sequence is MAQLFTKIIVYFLLFASPLLA. N28 carries N-linked (GlcNAc...) asparagine glycosylation. Position 85 (Y85) interacts with substrate. A glycan (N-linked (GlcNAc...) asparagine) is linked at N95. Substrate contacts are provided by N130, A131, E132, and N190. E191 acts as the Proton donor in catalysis. N247 carries N-linked (GlcNAc...) asparagine glycosylation. Substrate is bound at residue Y260. An intrachain disulfide couples C266 to C319. E303 functions as the Nucleophile in the catalytic mechanism. A substrate-binding site is contributed by Y368. N-linked (GlcNAc...) asparagine glycans are attached at residues N375, N406, N427, N451, N682, N740, N771, N784, N826, and N883.

This sequence belongs to the glycosyl hydrolase 35 family.

It is found in the secreted. The catalysed reaction is Hydrolysis of terminal non-reducing beta-D-galactose residues in beta-D-galactosides.. In terms of biological role, cleaves beta-linked terminal galactosyl residues from gangliosides, glycoproteins, and glycosaminoglycans. In Talaromyces marneffei (strain ATCC 18224 / CBS 334.59 / QM 7333) (Penicillium marneffei), this protein is Probable beta-galactosidase B (lacB).